The chain runs to 458 residues: MSLWDAIVIGAGPAGIGASGLLAENGAKVLVIDEAPGPGGQIWRGVEDVSDARARILGSDYLAGRDEVRRLRASGAELSFETQAWRVEPEGTVWLKDSHGIRRERGRRLLIATGAMERPCPLDGWTLPGVTTVGGLQILLKREGMLPGGPLVLIGTGPLFYLFAAQCLAAGMRDLSLIDTAAAGAIVSALRHVPAALTGKGPSYLIKGLKLLWMLRRAGVDIYNHSGDLRIKSAADGLEVHFRMREVEHRLSASHVGLHEGVIPETHLPRALGCRMHWSEAGGAFHPHRDIHLQSSVAGVYIAGDAGGIGGATVALLEGRLAAMGILASLGRPIDELLLRATRRDRAAHLAARPLLDHLYQPSPAILTPADGVLACRCEEVTCGEIRAALRAGCAGPNQVKAFLRCGMGPCQGRMCGMTLTSLAASTHDISMGDAGFLTIRPPLRPISLGEVADLVEP.

It to T-protein and to dimethylglycine dehydrogenase. As to quaternary structure, heterodimer of a subunit A and a subunit B.

The protein operates within opine metabolism; octopine degradation. Functionally, oxidative cleavage of octopine into L-arginine and pyruvate. This is Opine oxidase subunit A (ooxA) from Rhizobium meliloti (strain 1021) (Ensifer meliloti).